The sequence spans 440 residues: MGDWSFLGNILEEVNEHSTVIGRVWLTVLFIFRILILGTAAEFVWGDEQSDFVCNTQQPGCENVCYDEAFPISHIRLWVLQIIFVSTPSLMYVGHAVHHVRMEEKRKDREAEELCQQSRSNGGERVPIAPDQASIRKSSSSSKGTKKFRLEGTLLRTYVCHIIFKTLFEVGFIVGHYFLYGFRILPLYRCSRWPCPNVVDCFVSRPTEKTIFILFMLSVAFVSLFLNIMEMSHLGMKGIRSAFKRPAEQPLGEIAEKSLHSIAVSSIQKAKGYQLLEEEKIVSHYFPLTEVGMVETSPLSAKPFSQFEEKIGTGPLADMSRGYQETLPSYAQVGAQEVEREEQPVEEAVEPEVGEKKQEAEKVAPEGQETVAVPDGEKVETPGVGKDDEKEELQAEKVTKQGLSAEKAPTLCPELTTDDNRPLSRLSKASSRARSDDLTI.

Residues 2-12 (GDWSFLGNILE) lie within the membrane without spanning it. Residues 13-21 (EVNEHSTVI) are Cytoplasmic-facing. A helical membrane pass occupies residues 22 to 42 (GRVWLTVLFIFRILILGTAAE). Residues 43 to 71 (FVWGDEQSDFVCNTQQPGCENVCYDEAFP) lie on the Extracellular side of the membrane. 3 disulfides stabilise this stretch: Cys-54–Cys-201, Cys-61–Cys-195, and Cys-65–Cys-190. A helical transmembrane segment spans residues 72 to 92 (ISHIRLWVLQIIFVSTPSLMY). Residues 93–161 (VGHAVHHVRM…GTLLRTYVCH (69 aa)) are Cytoplasmic-facing. Positions 111–143 (AEELCQQSRSNGGERVPIAPDQASIRKSSSSSK) are disordered. A helical transmembrane segment spans residues 162 to 182 (IIFKTLFEVGFIVGHYFLYGF). Topologically, residues 183–210 (RILPLYRCSRWPCPNVVDCFVSRPTEKT) are extracellular. A helical membrane pass occupies residues 211-231 (IFILFMLSVAFVSLFLNIMEM). Topologically, residues 232–440 (SHLGMKGIRS…SRARSDDLTI (209 aa)) are cytoplasmic. The tract at residues 334–440 (GAQEVEREEQ…SRARSDDLTI (107 aa)) is disordered. 2 stretches are compositionally biased toward basic and acidic residues: residues 353–364 (VGEKKQEAEKVA) and 375–399 (DGEKVETPGVGKDDEKEELQAEKVT). Over residues 423 to 432 (LSRLSKASSR) the composition is skewed to low complexity.

Belongs to the connexin family. Alpha-type (group II) subfamily. As to quaternary structure, a hemichannel or connexon is composed of a hexamer of connexins. A functional gap junction is formed by the apposition of two hemichannels. Forms heteromeric channels with GJA3. As to expression, detected in eye lens (at protein level).

The protein localises to the cell membrane. It is found in the cell junction. It localises to the gap junction. Functionally, structural component of eye lens gap junctions. Gap junctions are dodecameric channels that connect the cytoplasm of adjoining cells. They are formed by the docking of two hexameric hemichannels, one from each cell membrane. Small molecules and ions diffuse from one cell to a neighboring cell via the central pore. The sequence is that of Gap junction alpha-8 protein (Gja8) from Rattus norvegicus (Rat).